A 328-amino-acid chain; its full sequence is MIEKIWSGESPLWRLLLPLSWLYGLVSGAIRLCYKLKLKRTWRAPVPVVVVGNLTAGGNGKTPVVVWLVEQLQQRGIRVGVVSRGYGGKAESYPLLLSADTTTAQAGDEPVLIYQRTDAAVAVSPVRSDAIKAILAQHPDVQIIVTDDGLQHYRLARDVEIVVIDGVRRFGNGWWLPAGPMRERAGRLKSVDAVIVNGGVPRSGEIPMHLLPGQAVNLRTGTRCDVAQLEHVVAMAGIGHPPRFFATLKMCGVQPEKCVPLADHQSLNHADVSALVSAGQTLVMTEKDAVKCRAFAEENWWYLPVDAQLSGDEPAKLLAQLTSLASGN.

55 to 62 contributes to the ATP binding site; that stretch reads TAGGNGKT.

Belongs to the LpxK family.

It carries out the reaction a lipid A disaccharide + ATP = a lipid IVA + ADP + H(+). It functions in the pathway glycolipid biosynthesis; lipid IV(A) biosynthesis; lipid IV(A) from (3R)-3-hydroxytetradecanoyl-[acyl-carrier-protein] and UDP-N-acetyl-alpha-D-glucosamine: step 6/6. Transfers the gamma-phosphate of ATP to the 4'-position of a tetraacyldisaccharide 1-phosphate intermediate (termed DS-1-P) to form tetraacyldisaccharide 1,4'-bis-phosphate (lipid IVA). In Escherichia coli O7:K1 (strain IAI39 / ExPEC), this protein is Tetraacyldisaccharide 4'-kinase.